Consider the following 130-residue polypeptide: Small ribosomal subunit protein uS9 (130 aa).

It belongs to the universal ribosomal protein uS9 family.

The polypeptide is Small ribosomal subunit protein uS9 (Clostridioides difficile (strain 630) (Peptoclostridium difficile)).